The following is a 686-amino-acid chain: Phosphomethylpyrimidine synthase (686 aa).

Residues Asn235, Met264, Tyr293, His329, 349-351 (SRG), 390-393 (DGMR), and Glu429 contribute to the substrate site. Residue His433 coordinates Zn(2+). A substrate-binding site is contributed by Tyr456. Position 497 (His497) interacts with Zn(2+). [4Fe-4S] cluster is bound by residues Cys577, Cys580, and Cys585. The interval 659-686 (IDSSGINDNKNDQQDASVVRVPSLEIEG) is disordered.

The protein belongs to the ThiC family. In terms of assembly, homodimer. It depends on [4Fe-4S] cluster as a cofactor.

The enzyme catalyses 5-amino-1-(5-phospho-beta-D-ribosyl)imidazole + S-adenosyl-L-methionine = 4-amino-2-methyl-5-(phosphooxymethyl)pyrimidine + CO + 5'-deoxyadenosine + formate + L-methionine + 3 H(+). The protein operates within cofactor biosynthesis; thiamine diphosphate biosynthesis. Functionally, catalyzes the synthesis of the hydroxymethylpyrimidine phosphate (HMP-P) moiety of thiamine from aminoimidazole ribotide (AIR) in a radical S-adenosyl-L-methionine (SAM)-dependent reaction. The sequence is that of Phosphomethylpyrimidine synthase from Shewanella denitrificans (strain OS217 / ATCC BAA-1090 / DSM 15013).